The sequence spans 469 residues: Putative pyridoxal-dependent decarboxylase domain-containing protein 2 (469 aa).

Residues 12 to 40 (TLAEMGKNLKEAVKMLEDSQRRTEEENGK) adopt a coiled-coil conformation. The segment covering 28–44 (EDSQRRTEEENGKKLIS) has biased composition (basic and acidic residues). A disordered region spans residues 28–47 (EDSQRRTEEENGKKLISRDI).

Belongs to the group II decarboxylase family. Requires pyridoxal 5'-phosphate as cofactor.

This Homo sapiens (Human) protein is Putative pyridoxal-dependent decarboxylase domain-containing protein 2 (PDXDC2P).